A 358-amino-acid polypeptide reads, in one-letter code: Magnesium-protoporphyrin IX monomethyl ester [oxidative] cyclase 3 (358 aa).

The protein belongs to the AcsF family. Fe cation is required as a cofactor.

The catalysed reaction is Mg-protoporphyrin IX 13-monomethyl ester + 3 NADPH + 3 O2 + 2 H(+) = 3,8-divinyl protochlorophyllide a + 3 NADP(+) + 5 H2O. The protein operates within porphyrin-containing compound metabolism; chlorophyll biosynthesis (light-independent). Its function is as follows. Catalyzes the formation of the isocyclic ring in chlorophyll biosynthesis. Mediates the cyclase reaction, which results in the formation of divinylprotochlorophyllide (Pchlide) characteristic of all chlorophylls from magnesium-protoporphyrin IX 13-monomethyl ester (MgPMME). The sequence is that of Magnesium-protoporphyrin IX monomethyl ester [oxidative] cyclase 3 from Nostoc sp. (strain PCC 7120 / SAG 25.82 / UTEX 2576).